The sequence spans 95 residues: Aspartyl/glutamyl-tRNA(Asn/Gln) amidotransferase subunit C (95 aa).

This sequence belongs to the GatC family. In terms of assembly, heterotrimer of A, B and C subunits.

The catalysed reaction is L-glutamyl-tRNA(Gln) + L-glutamine + ATP + H2O = L-glutaminyl-tRNA(Gln) + L-glutamate + ADP + phosphate + H(+). The enzyme catalyses L-aspartyl-tRNA(Asn) + L-glutamine + ATP + H2O = L-asparaginyl-tRNA(Asn) + L-glutamate + ADP + phosphate + 2 H(+). Its function is as follows. Allows the formation of correctly charged Asn-tRNA(Asn) or Gln-tRNA(Gln) through the transamidation of misacylated Asp-tRNA(Asn) or Glu-tRNA(Gln) in organisms which lack either or both of asparaginyl-tRNA or glutaminyl-tRNA synthetases. The reaction takes place in the presence of glutamine and ATP through an activated phospho-Asp-tRNA(Asn) or phospho-Glu-tRNA(Gln). The chain is Aspartyl/glutamyl-tRNA(Asn/Gln) amidotransferase subunit C from Nitrobacter winogradskyi (strain ATCC 25391 / DSM 10237 / CIP 104748 / NCIMB 11846 / Nb-255).